The sequence spans 368 residues: tRNA-specific 2-thiouridylase MnmA (368 aa).

ATP-binding positions include 11 to 18 (GMSGGVDS) and methionine 37. The tract at residues 97 to 99 (NPD) is interaction with target base in tRNA. Residue cysteine 102 is the Nucleophile of the active site. Cysteine 102 and cysteine 199 are disulfide-bonded. Glycine 127 is a binding site for ATP. Positions 149–151 (KDQ) are interaction with tRNA. Cysteine 199 (cysteine persulfide intermediate) is an active-site residue. The tract at residues 311 to 312 (RY) is interaction with tRNA.

The protein belongs to the MnmA/TRMU family. In terms of assembly, interacts with TusE.

The protein resides in the cytoplasm. The enzyme catalyses S-sulfanyl-L-cysteinyl-[protein] + uridine(34) in tRNA + AH2 + ATP = 2-thiouridine(34) in tRNA + L-cysteinyl-[protein] + A + AMP + diphosphate + H(+). Catalyzes the 2-thiolation of uridine at the wobble position (U34) of tRNA(Lys), tRNA(Glu) and tRNA(Gln), leading to the formation of s(2)U34, the first step of tRNA-mnm(5)s(2)U34 synthesis. Sulfur is provided by IscS, via a sulfur-relay system. Binds ATP and its substrate tRNAs. This is tRNA-specific 2-thiouridylase MnmA from Escherichia coli O6:H1 (strain CFT073 / ATCC 700928 / UPEC).